We begin with the raw amino-acid sequence, 296 residues long: Enoyl-CoA hydratase domain-containing protein 2, mitochondrial (296 aa).

At K101 the chain carries N6-acetyllysine; alternate. At K101 the chain carries N6-succinyllysine; alternate.

This sequence belongs to the enoyl-CoA hydratase/isomerase family.

It is found in the mitochondrion. The sequence is that of Enoyl-CoA hydratase domain-containing protein 2, mitochondrial (ECHDC2) from Bos taurus (Bovine).